The following is a 399-amino-acid chain: MSKAKFERTKPHVNIGTIGHVDHGKTTLTAAITQTMAARGLAEFKAFDQIDNAPEERERGITIATAHVEYQTDTRHYAHVDCPGHADYVKNMITGAAQMDGAILVVSAADGPMPQTREHILLARQVGVPAMVVFLNKADMVDDEELMELVELEVRELLSSYDFPGDDIPIVAGSALKALECGCGKDDCDACKPIIELMNQVDTYIPEPERDIDKPFLMPVEDVFSISGRGTVATGRVESGIVCVQDEIEIVGMKETTKTVVTGVEMFRKLLDQGQAGDNIGVLLRGVKREDIERGQVLAKPGSITPHTKFKAEAYILTKEEGGRHTPFFNGYRPQFYFRTTDVTGICELAEGTEMVMPGDNASMTVNLITPIAMDKELRFAIREGGRTVGAGVVSEVIE.

The 200-residue stretch at 10–209 folds into the tr-type G domain; it reads KPHVNIGTIG…QVDTYIPEPE (200 aa). Positions 19–26 are G1; sequence GHVDHGKT. 19–26 is a GTP binding site; the sequence is GHVDHGKT. Position 26 (Thr26) interacts with Mg(2+). The G2 stretch occupies residues 60-64; it reads GITIA. Residues 81–84 form a G3 region; it reads DCPG. Residues 81-85 and 136-139 contribute to the GTP site; these read DCPGH and NKAD. The tract at residues 136 to 139 is G4; that stretch reads NKAD. Residues 174–176 form a G5 region; that stretch reads SAL.

The protein belongs to the TRAFAC class translation factor GTPase superfamily. Classic translation factor GTPase family. EF-Tu/EF-1A subfamily. As to quaternary structure, monomer.

It localises to the cytoplasm. The catalysed reaction is GTP + H2O = GDP + phosphate + H(+). In terms of biological role, GTP hydrolase that promotes the GTP-dependent binding of aminoacyl-tRNA to the A-site of ribosomes during protein biosynthesis. The protein is Elongation factor Tu 1 of Syntrophotalea carbinolica (strain DSM 2380 / NBRC 103641 / GraBd1) (Pelobacter carbinolicus).